The primary structure comprises 299 residues: MQSNPVEQAALAYAGTRLKQTDAPLSAETQPGGVALHVQQVIKRYDGREVLHRIELTAAPGEFVAIVGRSGCGKSTLLRLVAGLECADEGAITLDAQPARTLQQDIRVMFQDSRLLPWKRVLENVALGLPRERREEAAAVLAQVGLRDRADAWPARLSGGQRQRVALARSLVHHPRLLLLDEPLGALDALTRIEMQGLIESLWRRLGFTALLVTHDVSEAVALADRIVLIEDGHIAMDERVALPRPRQHGSAAFAQIEERVLRRVMQHTPDAEGVSQSEQEATADWSLVRTVESVRFAV.

Residues 36-257 (LHVQQVIKRY…QHGSAAFAQI (222 aa)) enclose the ABC transporter domain. 68–75 (GRSGCGKS) serves as a coordination point for ATP.

The protein belongs to the ABC transporter superfamily. Aliphatic sulfonates importer (TC 3.A.1.17.2) family. As to quaternary structure, the complex is composed of two ATP-binding proteins (SsuB), two transmembrane proteins (SsuC) and a solute-binding protein (SsuA).

Its subcellular location is the cell inner membrane. It carries out the reaction ATP + H2O + aliphatic sulfonate-[sulfonate-binding protein]Side 1 = ADP + phosphate + aliphatic sulfonateSide 2 + [sulfonate-binding protein]Side 1.. In terms of biological role, part of the ABC transporter complex SsuABC involved in aliphatic sulfonates import. Responsible for energy coupling to the transport system. In Cupriavidus pinatubonensis (strain JMP 134 / LMG 1197) (Cupriavidus necator (strain JMP 134)), this protein is Aliphatic sulfonates import ATP-binding protein SsuB.